A 379-amino-acid chain; its full sequence is Cytochrome b (379 aa).

4 consecutive transmembrane segments (helical) span residues 32 to 52, 76 to 97, 112 to 132, and 177 to 197; these read FGSL…FLAM, WLIR…YMHI, WNVG…GYVL, and FFAF…IHLL. Residues His82 and His96 each contribute to the heme b site. The heme b site is built by His181 and His195. His200 serves as a coordination point for a ubiquinone. The next 4 membrane-spanning stretches (helical) occupy residues 225–245, 287–307, 319–339, and 346–366; these read YKDL…ALFS, LGGV…PFLH, LTQI…WIGG, and FIII…VLSP.

It belongs to the cytochrome b family. As to quaternary structure, the cytochrome bc1 complex contains 3 respiratory subunits (MT-CYB, CYC1 and UQCRFS1), 2 core proteins (UQCRC1 and UQCRC2) and probably 6 low-molecular weight proteins. It depends on heme b as a cofactor.

The protein localises to the mitochondrion inner membrane. In terms of biological role, component of the ubiquinol-cytochrome c reductase complex (complex III or cytochrome b-c1 complex) that is part of the mitochondrial respiratory chain. The b-c1 complex mediates electron transfer from ubiquinol to cytochrome c. Contributes to the generation of a proton gradient across the mitochondrial membrane that is then used for ATP synthesis. This is Cytochrome b (mt-cyb) from Chlorophthalmus agassizi (Shortnose greeneye).